The following is an 801-amino-acid chain: Protocadherin beta-8 (801 aa).

An N-terminal signal peptide occupies residues 1 to 29 (MEASGKLICRQRQVLFSFLLLGLSLAGAA). Over 30-691 (EPRSYSVVEE…GQADSLTVYL (662 aa)) the chain is Extracellular. Cadherin domains follow at residues 36–134 (VVEE…SPVF), 139–243 (MLVK…APEF), 248–348 (YRVQ…APEV), 353–452 (FTSP…APAF), and 457–562 (YTLF…SPFV). C97 and C103 are joined by a disulfide. Residues N419 and N437 are each glycosylated (N-linked (GlcNAc...) asparagine). The N-linked (GlcNAc...) asparagine glycan is linked to N568. In terms of domain architecture, Cadherin 6 spans 569–672 (GSAPCTELVP…LVDGFSQPYL (104 aa)). Residues 692–710 (VVALASVSSLFLFSVLLFV) form a helical membrane-spanning segment. The Cytoplasmic portion of the chain corresponds to 711-801 (AVLLCRRSRA…NGFGFSLQLK (91 aa)).

Forms homodimers in trans (molecules expressed by two different cells). Forms promiscuous heterodimers in cis (at the plasma membrane of the same cell) with other protocadherins.

The protein localises to the cell membrane. Functionally, calcium-dependent cell-adhesion protein involved in cells self-recognition and non-self discrimination. Thereby, it is involved in the establishment and maintenance of specific neuronal connections in the brain. The protein is Protocadherin beta-8 of Homo sapiens (Human).